Consider the following 257-residue polypeptide: Nickel import system ATP-binding protein NikD (257 aa).

Residues 4–245 (IDIQNLTIKN…HLHPYTERLI (242 aa)) enclose the ABC transporter domain. 37–44 (GESGAGKS) serves as a coordination point for ATP.

It belongs to the ABC transporter superfamily. As to quaternary structure, the complex is composed of two ATP-binding proteins (NikD and NikE), two transmembrane proteins (NikB and NikC) and a solute-binding protein (NikA).

It localises to the cell membrane. The enzyme catalyses Ni(2+)(out) + ATP + H2O = Ni(2+)(in) + ADP + phosphate + H(+). Functionally, part of the ABC transporter complex NikABCDE (Opp2) involved in nickel import. Probably responsible for energy coupling to the transport system. The polypeptide is Nickel import system ATP-binding protein NikD (Staphylococcus aureus (strain Mu50 / ATCC 700699)).